The primary structure comprises 885 residues: Translation initiation factor IF-2 (885 aa).

The tract at residues 1–295 (MTDNKDDKTI…EKFKRSQMQE (295 aa)) is disordered. The span at 63–77 (PVAAAPAAARPAEQR) shows a compositional bias: low complexity. Over residues 78–94 (PMPPQPSGRPAPQPQPH) the composition is skewed to pro residues. A compositionally biased stretch (basic and acidic residues) spans 130–183 (RDAEEAKRRAEEEVRRRREEEERIAREKEEAARRAAEEAARPAVEAEKVEEKVE). Residues 184-201 (AATPAVAETRPLSERPAP) are compositionally biased toward low complexity. The tr-type G domain maps to 383 to 550 (ARPPIVTIMG…AILLQSEILD (168 aa)). The tract at residues 392–399 (GHVDHGKT) is G1. Residue 392-399 (GHVDHGKT) coordinates GTP. Residues 417–421 (GITQH) form a G2 region. Positions 438–441 (DTPG) are G3. GTP is bound by residues 438–442 (DTPGH) and 492–495 (NKID). A G4 region spans residues 492–495 (NKID). Positions 528-530 (SAK) are G5.

It belongs to the TRAFAC class translation factor GTPase superfamily. Classic translation factor GTPase family. IF-2 subfamily.

Its subcellular location is the cytoplasm. Functionally, one of the essential components for the initiation of protein synthesis. Protects formylmethionyl-tRNA from spontaneous hydrolysis and promotes its binding to the 30S ribosomal subunits. Also involved in the hydrolysis of GTP during the formation of the 70S ribosomal complex. The chain is Translation initiation factor IF-2 from Sinorhizobium medicae (strain WSM419) (Ensifer medicae).